The chain runs to 283 residues: Bifunctional protein FolD (283 aa).

Residues 166-168 (GAS) and Ile232 each bind NADP(+).

The protein belongs to the tetrahydrofolate dehydrogenase/cyclohydrolase family. In terms of assembly, homodimer.

It catalyses the reaction (6R)-5,10-methylene-5,6,7,8-tetrahydrofolate + NADP(+) = (6R)-5,10-methenyltetrahydrofolate + NADPH. It carries out the reaction (6R)-5,10-methenyltetrahydrofolate + H2O = (6R)-10-formyltetrahydrofolate + H(+). It participates in one-carbon metabolism; tetrahydrofolate interconversion. Functionally, catalyzes the oxidation of 5,10-methylenetetrahydrofolate to 5,10-methenyltetrahydrofolate and then the hydrolysis of 5,10-methenyltetrahydrofolate to 10-formyltetrahydrofolate. This Mannheimia succiniciproducens (strain KCTC 0769BP / MBEL55E) protein is Bifunctional protein FolD.